The chain runs to 198 residues: Cytochrome c oxidase assembly protein CtaG (198 aa).

The Cytoplasmic portion of the chain corresponds to 1-12; the sequence is MADTGQSDRKER. A helical; Signal-anchor for type II membrane protein membrane pass occupies residues 13–35; the sequence is SNGVIVGTCLAFVVGMVGMAYAA. Topologically, residues 36 to 198 are periplasmic; it reads VPLYDMFCRV…QVKSRTENKL (163 aa).

This sequence belongs to the COX11/CtaG family.

The protein resides in the cell inner membrane. Exerts its effect at some terminal stage of cytochrome c oxidase synthesis, probably by being involved in the insertion of the copper B into subunit I. This chain is Cytochrome c oxidase assembly protein CtaG, found in Sinorhizobium medicae (strain WSM419) (Ensifer medicae).